The sequence spans 165 residues: Phosphopantetheine adenylyltransferase (165 aa).

T10 is a binding site for substrate. Residues 10–11 (TF) and H18 each bind ATP. Residues K42, L75, and R89 each contribute to the substrate site. Residues 90–92 (GVR), E100, and 125–131 (VSFISSS) contribute to the ATP site.

It belongs to the bacterial CoaD family. Homohexamer. Requires Mg(2+) as cofactor.

It localises to the cytoplasm. The enzyme catalyses (R)-4'-phosphopantetheine + ATP + H(+) = 3'-dephospho-CoA + diphosphate. Its pathway is cofactor biosynthesis; coenzyme A biosynthesis; CoA from (R)-pantothenate: step 4/5. Reversibly transfers an adenylyl group from ATP to 4'-phosphopantetheine, yielding dephospho-CoA (dPCoA) and pyrophosphate. This Buchnera aphidicola subsp. Schizaphis graminum (strain Sg) protein is Phosphopantetheine adenylyltransferase.